An 813-amino-acid chain; its full sequence is Leucine--tRNA ligase (813 aa).

A 'HIGH' region motif is present at residues 41–51; that stretch reads PYPSGTLHMGH. Residues 575-579 carry the 'KMSKS' region motif; the sequence is KMSKS. An ATP-binding site is contributed by lysine 578.

This sequence belongs to the class-I aminoacyl-tRNA synthetase family.

Its subcellular location is the cytoplasm. The catalysed reaction is tRNA(Leu) + L-leucine + ATP = L-leucyl-tRNA(Leu) + AMP + diphosphate. The chain is Leucine--tRNA ligase from Francisella tularensis subsp. tularensis (strain FSC 198).